The chain runs to 172 residues: Co-chaperone protein HscB homolog (172 aa).

The region spanning 2 to 74 (NHFELFGLVE…LRRAEYLLSL (73 aa)) is the J domain.

This sequence belongs to the HscB family. Interacts with HscA and stimulates its ATPase activity.

Co-chaperone involved in the maturation of iron-sulfur cluster-containing proteins. Seems to help targeting proteins to be folded toward HscA. This Aeromonas salmonicida (strain A449) protein is Co-chaperone protein HscB homolog.